A 472-amino-acid chain; its full sequence is ATP synthase subunit beta (472 aa).

Glycine 150–threonine 157 lines the ATP pocket.

The protein belongs to the ATPase alpha/beta chains family. F-type ATPases have 2 components, CF(1) - the catalytic core - and CF(0) - the membrane proton channel. CF(1) has five subunits: alpha(3), beta(3), gamma(1), delta(1), epsilon(1). CF(0) has four main subunits: a, b, b' and c.

Its subcellular location is the cellular chromatophore membrane. It carries out the reaction ATP + H2O + 4 H(+)(in) = ADP + phosphate + 5 H(+)(out). Produces ATP from ADP in the presence of a proton gradient across the membrane. The catalytic sites are hosted primarily by the beta subunits. This chain is ATP synthase subunit beta, found in Rhodobacter capsulatus (Rhodopseudomonas capsulata).